A 718-amino-acid chain; its full sequence is Effector protein hopM1 (718 aa).

The segment covering 1–10 (MIGTRVGGSG) has biased composition (gly residues). 2 disordered regions span residues 1–63 (MIGT…ARLP) and 683–718 (GVSSLRDAHKPAETSSPTADDAAAVELTAMEEGRRR). Positions 11–22 (STEIVQANQPQP) are enriched in polar residues. The segment covering 44 to 60 (ASQSAAQAPESSAAGAA) has biased composition (low complexity).

In terms of assembly, interacts with the chaperone ShcM.

The protein localises to the secreted. The protein resides in the host membrane. Its function is as follows. Involved in the suppression of basal resistance and promotion of disease symptoms in plants. May be involved in the inhibition of a host vesicle trafficking pathway. This is Effector protein hopM1 (hopM1) from Pseudomonas syringae pv. syringae (strain B728a).